The primary structure comprises 514 residues: 2,3-bisphosphoglycerate-independent phosphoglycerate mutase (514 aa).

2 residues coordinate Mn(2+): D14 and S64. The active-site Phosphoserine intermediate is S64. Residues H125, 155–156 (RD), R187, R193, 263–266 (RADR), and K336 contribute to the substrate site. Positions 403, 407, 444, 445, and 463 each coordinate Mn(2+).

This sequence belongs to the BPG-independent phosphoglycerate mutase family. Monomer. Mn(2+) is required as a cofactor.

The enzyme catalyses (2R)-2-phosphoglycerate = (2R)-3-phosphoglycerate. Its pathway is carbohydrate degradation; glycolysis; pyruvate from D-glyceraldehyde 3-phosphate: step 3/5. Functionally, catalyzes the interconversion of 2-phosphoglycerate and 3-phosphoglycerate. In Escherichia coli O1:K1 / APEC, this protein is 2,3-bisphosphoglycerate-independent phosphoglycerate mutase.